We begin with the raw amino-acid sequence, 299 residues long: MKIQCNVCEAAEATVLCCADEAALCWACDEKIHAANKLAGKHQRVPLSASASSIPKCDICQEASGFFFCLQDRALLCRKCDVAIHTVNPHVSAHQRFLLTGIKVGLESIDTGPSTKSSPTNDDKTMETKPFVQSIPEPQKMAFDHHHHQQQQEQQEGVIPGTKVNDQTSTKLPLVSSGSTTGSIPQWQIEEIFGLTDFDQSYEYMENNGSSKADTSRRGDSDSSSMMRSAEEDGEDNNNCLGGETSWAVPQIQSPPTASGLNWPKHFHHHSVFVPDITSSTPYTGSSPNQRVGKRRRRF.

Residues Cys-5, Cys-8, Cys-28, His-33, Cys-57, Cys-60, Cys-80, and His-85 each contribute to the Zn(2+) site. Residues Cys-5–Leu-47 form a B box-type 1; atypical zinc finger. A B box-type 2; atypical zinc finger spans residues Cys-57 to Leu-99. 2 disordered regions span residues Phe-143–Thr-181 and Glu-206–Phe-299. Composition is skewed to polar residues over residues Val-164–Thr-181, Gln-251–Gly-260, and Ile-277–Gln-290.

In terms of assembly, interacts with HY5. In terms of processing, ubiquitinated by COP1 in vitro. COP1-mediated degradation of BBX22 by the proteasome occurs in the dark and is important for a precise skotomorphogenesis process and optimization of seedling growth under short days conditions.

It localises to the nucleus. Acts as a positive regulator of seedling photomorphogenesis and light-regulated inhibition of hypocotyl elongation, independently and in concert with HY5 and BBX21. Acts as a positive regulator of de-etiolation and influences chloroplast biogenesis and function through regulation of genes encoding chloroplast proteins. Acts downstream of COP1 and plays an important role in early and long-term adjustment of the shade avoidance syndrome (SAS) responses in natural environments. Regulates the expression of genes responsive to light hormone signals which may contribute to optimal seedling development. This is B-box zinc finger protein 22 from Arabidopsis thaliana (Mouse-ear cress).